Reading from the N-terminus, the 243-residue chain is MAVKQRIDQQSAWVLHTLPWRETSLIVEVFSRDHGRLALVAKGARRPHSAFRGVLMAFQPLLMDWSGGGEVRTLVRAEWQGGQPLLTGQALLCGYYLNELLVKLTPRDDPHPNLFVAYADAVRELGLGRPPPPVLRQFELALLQELGYGIELVHDVQSGEAVRGDATYAYIIEGGPAALDAPGDAPPDLPVVSGQTLLDMAAGDFSRSETLAQSKRLLRVLINHYLGGQPLQSRRVLQELLEL.

It belongs to the RecO family.

Involved in DNA repair and RecF pathway recombination. This is DNA repair protein RecO from Azoarcus sp. (strain BH72).